Here is a 323-residue protein sequence, read N- to C-terminus: Sphingolipid delta(4)-desaturase DES1 (323 aa).

2 helical membrane passes run 41-61 (HNLIWIVSLMVLTQLVAFYLV) and 68-88 (WLLFWTYVVGSCISHSMTLAI). A Histidine box-1 motif is present at residues 89–93 (HEISH). A helical transmembrane segment spans residues 104 to 124 (WNRCFGMFANLPLGLPYSVSF). The Histidine box-2 signature appears at 128–132 (HMDHH). 3 consecutive transmembrane segments (helical) span residues 152–172 (FFCTPLRKLVWIILQPLFYTI), 185–205 (LEIINLVVQFSFDALIYYTLG), and 210–230 (FYMLVGSILGLGLHPISGHFI). Positions 259-263 (HNEHH) match the Histidine box-3 motif.

Belongs to the fatty acid desaturase type 1 family. DEGS subfamily. As to quaternary structure, interacts with RLBP1; the interaction increases synthesis of chromophore-precursors by DEGS1.

It is found in the endoplasmic reticulum membrane. The catalysed reaction is an N-acylsphinganine + 2 Fe(II)-[cytochrome b5] + O2 + 2 H(+) = an N-acylsphing-4-enine + 2 Fe(III)-[cytochrome b5] + 2 H2O. The enzyme catalyses all-trans-retinol = 11-cis-retinol. It catalyses the reaction all-trans-retinol = 9-cis-retinol. It carries out the reaction all-trans-retinol = 13-cis-retinol. The catalysed reaction is 11-cis-retinol = 13-cis-retinol. The enzyme catalyses 11-cis-retinol = 9-cis-retinol. Its function is as follows. Has sphingolipid-delta-4-desaturase activity. Converts D-erythro-sphinganine to D-erythro-sphingosine (E-sphing-4-enine). Catalyzes the equilibrium isomerization of retinols. This Xenopus tropicalis (Western clawed frog) protein is Sphingolipid delta(4)-desaturase DES1 (degs1).